The primary structure comprises 159 residues: Putative viral CXC chemokine 2 (159 aa).

2 disulfides stabilise this stretch: Cys50–Cys77 and Cys52–Cys93.

It belongs to the intercrine alpha (chemokine CxC) family.

The sequence is that of Putative viral CXC chemokine 2 (UL147) from Human cytomegalovirus (strain Merlin) (HHV-5).